Consider the following 156-residue polypeptide: Small ribosomal subunit protein uS7 (156 aa).

Belongs to the universal ribosomal protein uS7 family. In terms of assembly, part of the 30S ribosomal subunit. Contacts proteins S9 and S11.

One of the primary rRNA binding proteins, it binds directly to 16S rRNA where it nucleates assembly of the head domain of the 30S subunit. Is located at the subunit interface close to the decoding center, probably blocks exit of the E-site tRNA. The polypeptide is Small ribosomal subunit protein uS7 (Acholeplasma laidlawii (strain PG-8A)).